We begin with the raw amino-acid sequence, 292 residues long: UDP-3-O-acyl-N-acetylglucosamine deacetylase (292 aa).

Zn(2+)-binding residues include histidine 75, histidine 231, and aspartate 235. Histidine 258 (proton donor) is an active-site residue.

It belongs to the LpxC family. Requires Zn(2+) as cofactor.

It carries out the reaction a UDP-3-O-[(3R)-3-hydroxyacyl]-N-acetyl-alpha-D-glucosamine + H2O = a UDP-3-O-[(3R)-3-hydroxyacyl]-alpha-D-glucosamine + acetate. The protein operates within glycolipid biosynthesis; lipid IV(A) biosynthesis; lipid IV(A) from (3R)-3-hydroxytetradecanoyl-[acyl-carrier-protein] and UDP-N-acetyl-alpha-D-glucosamine: step 2/6. Catalyzes the hydrolysis of UDP-3-O-myristoyl-N-acetylglucosamine to form UDP-3-O-myristoylglucosamine and acetate, the committed step in lipid A biosynthesis. In Nautilia profundicola (strain ATCC BAA-1463 / DSM 18972 / AmH), this protein is UDP-3-O-acyl-N-acetylglucosamine deacetylase.